The primary structure comprises 62 residues: Photosystem II reaction center protein Z (62 aa).

The next 2 membrane-spanning stretches (helical) occupy residues 8–28 and 41–61; these read TMFALIAISFLLIIGVPITFA and FSGVSLWIVLVFAVGILNSFI.

The protein belongs to the PsbZ family. In terms of assembly, PSII is composed of 1 copy each of membrane proteins PsbA, PsbB, PsbC, PsbD, PsbE, PsbF, PsbH, PsbI, PsbJ, PsbK, PsbL, PsbM, PsbT, PsbY, PsbZ, Psb30/Ycf12, at least 3 peripheral proteins of the oxygen-evolving complex and a large number of cofactors. It forms dimeric complexes.

The protein localises to the plastid. It localises to the chloroplast thylakoid membrane. In terms of biological role, may control the interaction of photosystem II (PSII) cores with the light-harvesting antenna, regulates electron flow through the 2 photosystem reaction centers. PSII is a light-driven water plastoquinone oxidoreductase, using light energy to abstract electrons from H(2)O, generating a proton gradient subsequently used for ATP formation. This chain is Photosystem II reaction center protein Z, found in Welwitschia mirabilis (Tree tumbo).